We begin with the raw amino-acid sequence, 239 residues long: Ribosomal RNA small subunit methyltransferase G (239 aa).

Residues glycine 76, phenylalanine 81, 99–101 (DSS), 128–129 (IE), and arginine 147 each bind S-adenosyl-L-methionine.

This sequence belongs to the methyltransferase superfamily. RNA methyltransferase RsmG family.

It localises to the cytoplasm. Specifically methylates the N7 position of a guanine in 16S rRNA. The protein is Ribosomal RNA small subunit methyltransferase G of Prochlorococcus marinus (strain MIT 9515).